The primary structure comprises 725 residues: A-agglutinin anchorage subunit (725 aa).

An N-terminal signal peptide occupies residues 1-24; the sequence is MTLSFAHFTYLFTILLGLTNIALA. Tandem repeats lie at residues 53–149, 182–188, 189–195, 196–202, 203–209, 210–216, 217–223, 224–230, 231–237, 238–244, 245–251, 252–258, 259–265, 266–272, 273–279, 280–286, 287–293, 294–300, and 301–307. The tract at residues 53–493 is 2 X approximate repeats; that stretch reads VSTSTIVQAG…TSHSYSSVQT (441 aa). 2 disordered regions span residues 168 to 318 and 335 to 363; these read PVTS…TSIS and SSTSVSLYSPSTPVYSVPSTSSNVATPSM. An 18 X approximate tandem repeats, Ser/Thr-rich region spans residues 182-307; sequence TTTSLSSTST…PSLTSSSPTL (126 aa). A 1-2 repeat occupies 395-493; the sequence is MSTYFTTVSG…TSHSYSSVQT (99 aa). Gly-699 carries GPI-anchor amidated glycine lipidation. The propeptide at 700–725 is removed in mature form; that stretch reads SGSQTRLPLGKLVFAIMAVACNVIFS.

Heterodimer; disulfide-linked. In terms of processing, extensively O-glycosylated by PMT1 and PMT2. The GPI-anchor is attached to the protein in the endoplasmic reticulum and serves to target the protein to the cell surface. There, the glucosamine-inositol phospholipid moiety is cleaved off and the GPI-modified mannoprotein is covalently attached via its lipidless GPI glycan remnant to the 1,6-beta-glucan of the outer cell wall layer.

Its subcellular location is the secreted. It localises to the cell wall. The protein resides in the membrane. In terms of biological role, cell wall anchoring subunit of the a-agglutinin heterodimer. S.cerevisiae a and alpha cells express the complementary cell surface glycoproteins a-agglutinin and alpha-agglutinin, respectively, which interact with one another to promote cellular aggregation during mating. This is A-agglutinin anchorage subunit (AGA1) from Saccharomyces cerevisiae (strain ATCC 204508 / S288c) (Baker's yeast).